A 181-amino-acid chain; its full sequence is Translation initiation factor IF-3 (181 aa).

The protein belongs to the IF-3 family. As to quaternary structure, monomer.

The protein localises to the cytoplasm. IF-3 binds to the 30S ribosomal subunit and shifts the equilibrium between 70S ribosomes and their 50S and 30S subunits in favor of the free subunits, thus enhancing the availability of 30S subunits on which protein synthesis initiation begins. This chain is Translation initiation factor IF-3, found in Mycoplasma mycoides subsp. mycoides SC (strain CCUG 32753 / NCTC 10114 / PG1).